The sequence spans 69 residues: Large ribosomal subunit protein bL28 (69 aa).

This sequence belongs to the bacterial ribosomal protein bL28 family.

The chain is Large ribosomal subunit protein bL28 from Aquifex aeolicus (strain VF5).